The chain runs to 600 residues: NADH-quinone oxidoreductase subunit C/D (600 aa).

The tract at residues 1–190 is NADH dehydrogenase I subunit C; that stretch reads MVNNMTDLTA…SPFELTKAKQ (190 aa). The NADH dehydrogenase I subunit D stretch occupies residues 214-600; sequence DFMFLNLGPN…IDFVMSDVDR (387 aa).

It in the N-terminal section; belongs to the complex I 30 kDa subunit family. The protein in the C-terminal section; belongs to the complex I 49 kDa subunit family. NDH-1 is composed of 13 different subunits. Subunits NuoB, CD, E, F, and G constitute the peripheral sector of the complex.

It localises to the cell inner membrane. The enzyme catalyses a quinone + NADH + 5 H(+)(in) = a quinol + NAD(+) + 4 H(+)(out). Its function is as follows. NDH-1 shuttles electrons from NADH, via FMN and iron-sulfur (Fe-S) centers, to quinones in the respiratory chain. The immediate electron acceptor for the enzyme in this species is believed to be ubiquinone. Couples the redox reaction to proton translocation (for every two electrons transferred, four hydrogen ions are translocated across the cytoplasmic membrane), and thus conserves the redox energy in a proton gradient. The chain is NADH-quinone oxidoreductase subunit C/D from Escherichia coli (strain K12 / DH10B).